We begin with the raw amino-acid sequence, 542 residues long: Chaperonin GroEL (542 aa).

ATP is bound by residues T29–P32, D86–T90, G413, N476–A478, and D492.

This sequence belongs to the chaperonin (HSP60) family. As to quaternary structure, forms a cylinder of 14 subunits composed of two heptameric rings stacked back-to-back. Interacts with the co-chaperonin GroES.

It is found in the cytoplasm. It catalyses the reaction ATP + H2O + a folded polypeptide = ADP + phosphate + an unfolded polypeptide.. Its function is as follows. Together with its co-chaperonin GroES, plays an essential role in assisting protein folding. The GroEL-GroES system forms a nano-cage that allows encapsulation of the non-native substrate proteins and provides a physical environment optimized to promote and accelerate protein folding. This Listeria welshimeri serovar 6b (strain ATCC 35897 / DSM 20650 / CCUG 15529 / CIP 8149 / NCTC 11857 / SLCC 5334 / V8) protein is Chaperonin GroEL.